Here is a 284-residue protein sequence, read N- to C-terminus: Cell division protein ZipA (284 aa).

Position 1 (Met1) is a topological domain, periplasmic. A helical membrane pass occupies residues Glu2–Phe22. The Cytoplasmic segment spans residues Asp23 to Arg284. Residues Pro47–Pro140 are disordered. Composition is skewed to basic and acidic residues over residues Leu62–Leu75, Arg83–Gln102, and Ser119–Pro140.

Belongs to the ZipA family. As to quaternary structure, interacts with FtsZ via their C-terminal domains.

The protein localises to the cell inner membrane. Functionally, essential cell division protein that stabilizes the FtsZ protofilaments by cross-linking them and that serves as a cytoplasmic membrane anchor for the Z ring. Also required for the recruitment to the septal ring of downstream cell division proteins. In Pseudomonas fluorescens (strain ATCC BAA-477 / NRRL B-23932 / Pf-5), this protein is Cell division protein ZipA.